The primary structure comprises 206 residues: Glycerol-3-phosphate acyltransferase (206 aa).

Helical transmembrane passes span 6-26, 57-77, 86-106, 118-138, 143-163, and 165-185; these read IFLAFLCIGVSYSLGSFPSGF, KAALIVFLIDVSKGIGSILIA, FHVICGIAALSGHIWPIWLNW, VFLGISWQVGLASLGIFMAVL, IVSLSSISAAISLPILMFLSL, and EASFLNAYIIASFAAMIMVLW.

It belongs to the PlsY family. In terms of assembly, probably interacts with PlsX.

It localises to the cell inner membrane. It catalyses the reaction an acyl phosphate + sn-glycerol 3-phosphate = a 1-acyl-sn-glycero-3-phosphate + phosphate. It participates in lipid metabolism; phospholipid metabolism. Functionally, catalyzes the transfer of an acyl group from acyl-phosphate (acyl-PO(4)) to glycerol-3-phosphate (G3P) to form lysophosphatidic acid (LPA). This enzyme utilizes acyl-phosphate as fatty acyl donor, but not acyl-CoA or acyl-ACP. In Prochlorococcus marinus (strain MIT 9211), this protein is Glycerol-3-phosphate acyltransferase.